A 493-amino-acid chain; its full sequence is WAS/WASL-interacting protein family member 1 (493 aa).

The span at 1–14 (MPVPPPPAPPPPPT) shows a compositional bias: pro residues. The interval 1–493 (MPVPPPPAPP…GAPPLPPIPR (493 aa)) is disordered. Positions 21–31 (EKPTLNKTEQA) are enriched in polar residues. One can recognise a WH2 domain in the interval 32–49 (GRNALLSDISKGKKLKKT). R33 carries the post-translational modification Asymmetric dimethylarginine. Residues 45–48 (KLKK) are binds actin. A compositionally biased stretch (gly residues) spans 67-105 (ASAGGYGGGGGGGGGGGGGGGGSGGNFGGGGPPGLGGLF). Omega-N-methylarginine occurs at positions 126 and 135. 3 stretches are compositionally biased toward pro residues: residues 142-155 (FSPP…PAPS), 162-175 (PPEP…PPRP), and 183-195 (SLPP…PRPV). At S143 the chain carries Phosphoserine. S227 carries the post-translational modification Phosphoserine. Pro residues-rich tracts occupy residues 239–248 (FPRPPLPPTP), 274–290 (VPPP…PSTP), and 298–315 (APPP…PLPP). S330 and S340 each carry phosphoserine. Residues 336–361 (PPLPSPGRSGPLPPPPSERPPPPVRD) are compositionally biased toward pro residues. 3 XRSGPXPPXP motif repeats span residues 342 to 351 (GRSGPLPPPP), 364 to 373 (GRSGPLPPPP), and 400 to 409 (PRSGPRPPLP). Pro residues predominate over residues 403–424 (GPRPPLPPDRPGAGAPPPPPPS). Residues 425 to 434 (TSVRNGFQDS) are compositionally biased toward polar residues. Basic and acidic residues predominate over residues 470–484 (ARNESRSGSNRRERG).

This sequence belongs to the verprolin family. Binds to WAS within the N-terminal region, at a site distinct from the CDC42-binding site. Binds profilin and actin. Binds to WASL. Interacts with DBNL. Interacts with DBNL. Interacts with FNBP1L (via the SH3 domain).

The protein localises to the cytoplasmic vesicle. Its subcellular location is the cytoplasm. It is found in the cytoskeleton. The protein resides in the cell projection. It localises to the ruffle. In terms of biological role, plays a role in the reorganization of the actin cytoskeleton. Contributes with NCK1 and GRB2 in the recruitment and activation of WASL. May participate in regulating the subcellular localization of WASL, resulting in the disassembly of stress fibers in favor of filopodia formation. Plays a role in the formation of cell ruffles. The chain is WAS/WASL-interacting protein family member 1 (Wipf1) from Mus musculus (Mouse).